The chain runs to 201 residues: Prostamide/prostaglandin F synthase (201 aa).

The residue at position 108 (Tyr-108) is a Phosphotyrosine.

The protein belongs to the peroxiredoxin-like PRXL2 family. Prostamide/prostaglandin F synthase subfamily.

The protein localises to the cytoplasm. Its subcellular location is the cytosol. The enzyme catalyses prostaglandin H2 + [thioredoxin]-dithiol = prostaglandin F2alpha + [thioredoxin]-disulfide. It carries out the reaction prostamide F2alpha + [thioredoxin]-disulfide = prostamide H2 + [thioredoxin]-dithiol. Functionally, catalyzes the reduction of prostaglandin-ethanolamide H(2) (prostamide H(2)) to prostamide F(2alpha) with NADPH as proton donor. Also able to reduce prostaglandin H(2) to prostaglandin F(2alpha). The chain is Prostamide/prostaglandin F synthase (PRXL2B) from Bos taurus (Bovine).